The primary structure comprises 386 residues: Probable magnesium transporter NIPA5 (386 aa).

Residues methionine 1–aspartate 18 are Extracellular-facing. Residues asparagine 19–valine 39 traverse the membrane as a helical segment. Residues lysine 40–tyrosine 61 lie on the Cytoplasmic side of the membrane. 2 helical membrane passes run leucine 62–phenylalanine 82 and alanine 83–isoleucine 103. Residues serine 104–lysine 115 lie on the Cytoplasmic side of the membrane. A helical membrane pass occupies residues leucine 116–leucine 136. Topologically, residues histidine 137–proline 157 are extracellular. A helical transmembrane segment spans residues alanine 158 to isoleucine 178. At proline 179–tyrosine 189 the chain is on the cytoplasmic side. A helical membrane pass occupies residues isoleucine 190–alanine 210. Residues leucine 211 to glutamine 220 lie on the Extracellular side of the membrane. A helical transmembrane segment spans residues leucine 221–methionine 241. Topologically, residues asparagine 242–valine 255 are cytoplasmic. The chain crosses the membrane as a helical span at residues valine 256 to phenylalanine 276. The Extracellular segment spans residues lysine 277 to serine 283. The helical transmembrane segment at glycine 284–leucine 304 threads the bilayer. The Cytoplasmic segment spans residues histidine 305–serine 386. A disordered region spans residues arginine 352–serine 386. Over residues proline 376–serine 386 the composition is skewed to basic and acidic residues.

Belongs to the NIPA (TC 2.A.7) family. In terms of assembly, homodimer.

The protein resides in the cell membrane. It is found in the early endosome. Its function is as follows. Acts as a Mg(2+) transporter. Can also transport other divalent cations such as Fe(2+), Sr(2+), Ba(2+), Mn(2+) and Co(2+) but to a much less extent than Mg(2+). This is Probable magnesium transporter NIPA5 from Arabidopsis thaliana (Mouse-ear cress).